The following is a 999-amino-acid chain: Probable K(+)/H(+) antiporter subunit A/B (999 aa).

The segment at 1–20 (MTRPASVLAGPKSRPPIHSQ) is disordered. A run of 24 helical transmembrane segments spans residues 31-48 (LLSV…IAIF), 63-85 (AIAL…GGVL), 106-128 (FAWL…ARYY), 138-160 (FFAL…NLIL), 162-181 (AVFW…YWHH), 191-213 (MALT…IGKI), 233-255 (PLYG…QFPF), 270-292 (SAYL…FWPV), 299-321 (WFWI…AIFQ), 336-358 (LGLI…VFHI), 389-411 (GLFH…MAGV), 442-464 (YVAT…GVFF), 488-510 (FLVL…FLHT), 530-552 (GWNI…YFLM), 604-621 (RLLV…LLLG), 636-653 (AFAL…GSAY), 660-682 (LASL…WLSA), 686-708 (AVTQ…RWLP), 729-751 (LRDL…TVMT), 788-807 (TLGE…ALLL), 846-868 (FIPA…FLFL), 878-900 (FAAG…TRWV), 913-935 (SIGL…PFLT), and 955-977 (ILFD…IALA).

It in the N-terminal section; belongs to the CPA3 antiporters (TC 2.A.63) subunit A family. The protein in the C-terminal section; belongs to the CPA3 antiporters (TC 2.A.63) subunit B family. May form a heterooligomeric complex that consists of six subunits: PhaAB, PhaC, PhaD, PhaE, PhaF and PhaG.

It localises to the cell membrane. Its function is as follows. Part of a K(+) efflux system which is required for the adaptation of R.meliloti to alkaline pH as well as for the infection process during symbiotic nodule development. The protein is Probable K(+)/H(+) antiporter subunit A/B (phaAB) of Rhizobium meliloti (strain 1021) (Ensifer meliloti).